A 359-amino-acid chain; its full sequence is ATP-dependent kinase YFH7 (359 aa).

31–39 (GPPGSGKST) lines the ATP pocket.

The protein belongs to the YFH7 family.

ATP-dependent kinase that could be involved in endoplasmic reticulum membrane assembly. The sequence is that of ATP-dependent kinase YFH7 (YFH7) from Vanderwaltozyma polyspora (strain ATCC 22028 / DSM 70294 / BCRC 21397 / CBS 2163 / NBRC 10782 / NRRL Y-8283 / UCD 57-17) (Kluyveromyces polysporus).